A 433-amino-acid polypeptide reads, in one-letter code: Trigger factor (433 aa).

In terms of domain architecture, PPIase FKBP-type spans 163-248; the sequence is GDVVVLDFAA…VHAVKERRLP (86 aa).

This sequence belongs to the FKBP-type PPIase family. Tig subfamily.

It localises to the cytoplasm. The enzyme catalyses [protein]-peptidylproline (omega=180) = [protein]-peptidylproline (omega=0). Functionally, involved in protein export. Acts as a chaperone by maintaining the newly synthesized protein in an open conformation. Functions as a peptidyl-prolyl cis-trans isomerase. The protein is Trigger factor of Nitratidesulfovibrio vulgaris (strain DP4) (Desulfovibrio vulgaris).